The sequence spans 531 residues: Serine-type carboxypeptidase F (531 aa).

The N-terminal stretch at 1-25 (MLFRSLLSTAVLAVSLCTDNASAAK) is a signal peptide. Asn-20 carries an N-linked (GlcNAc...) asparagine glycan. A propeptide spanning residues 26-52 (HGRFGQKARDAMNIAKRSANAVKHSLK) is cleaved from the precursor. Residues Asn-63, Asn-94, and Asn-155 are each glycosylated (N-linked (GlcNAc...) asparagine). The active site involves Ser-211. N-linked (GlcNAc...) asparagine glycans are attached at residues Asn-228, Asn-271, Asn-309, and Asn-378. The active site involves Asp-430. 2 N-linked (GlcNAc...) asparagine glycosylation sites follow: Asn-436 and Asn-444. Residue His-507 is part of the active site.

This sequence belongs to the peptidase S10 family. Monomer.

Its activity is regulated as follows. Inhibited by DFP, and Hg(Cl)2. In terms of biological role, removes any amino acid from the C-terminus of a long peptide. Digests preferentially peptides containing a positively charged residue in P1' position, as well as arginine, lysine or phenylalanine in P1 position of ester substrate. Also catalyzes peptide synthesis. This is Serine-type carboxypeptidase F (pepF) from Aspergillus niger.